Reading from the N-terminus, the 329-residue chain is Beta-ketoacyl-[acyl-carrier-protein] synthase III (329 aa).

Active-site residues include C123 and H256. The segment at 257 to 261 (QANIR) is ACP-binding. The active site involves N286.

This sequence belongs to the thiolase-like superfamily. FabH family. Homodimer.

The protein localises to the cytoplasm. It catalyses the reaction malonyl-[ACP] + acetyl-CoA + H(+) = 3-oxobutanoyl-[ACP] + CO2 + CoA. It participates in lipid metabolism; fatty acid biosynthesis. In terms of biological role, catalyzes the condensation reaction of fatty acid synthesis by the addition to an acyl acceptor of two carbons from malonyl-ACP. Catalyzes the first condensation reaction which initiates fatty acid synthesis and may therefore play a role in governing the total rate of fatty acid production. Possesses both acetoacetyl-ACP synthase and acetyl transacylase activities. Its substrate specificity determines the biosynthesis of branched-chain and/or straight-chain of fatty acids. This is Beta-ketoacyl-[acyl-carrier-protein] synthase III from Paraburkholderia phymatum (strain DSM 17167 / CIP 108236 / LMG 21445 / STM815) (Burkholderia phymatum).